The primary structure comprises 739 residues: ABC transporter G family member 20 (739 aa).

Residues 88–351 enclose the ABC transporter domain; that stretch reads LSFKDLTYSV…FSEFGHPIPE (264 aa). Residue 144–151 coordinates ATP; it reads GASGSGKS. An ABC transmembrane type-2 domain is found at 433-643; it reads TEMLVIGKRS…PYEGVLQNEF (211 aa). The next 6 membrane-spanning stretches (helical) occupy residues 452 to 472, 487 to 507, 528 to 548, 563 to 583, 593 to 613, and 712 to 732; these read LFGIRLGAVLVTGMILATIFW, FFAFAMSTTFYTCAEAIPVFL, VLAHTIISIPALIILSAAFAA, FLFFFFTILTAFWAGSSFVTF, IGFTVVVAILAYFLLFSGFFI, and LWITVAWGFFFRVLFYFTLLI.

The protein belongs to the ABC transporter superfamily. ABCG family. Eye pigment precursor importer (TC 3.A.1.204) subfamily.

The protein localises to the membrane. The protein is ABC transporter G family member 20 (ABCG20) of Arabidopsis thaliana (Mouse-ear cress).